We begin with the raw amino-acid sequence, 270 residues long: 3-phenylpropionate-dihydrodiol/cinnamic acid-dihydrodiol dehydrogenase (270 aa).

Position 10 to 34 (10 to 34 (FITGGGSGLGLALVERFIEEGAQVA)) interacts with NAD(+). Ser-143 is a binding site for substrate. The Proton acceptor role is filled by Tyr-156.

It belongs to the short-chain dehydrogenases/reductases (SDR) family.

It carries out the reaction 3-(cis-5,6-dihydroxycyclohexa-1,3-dien-1-yl)propanoate + NAD(+) = 3-(2,3-dihydroxyphenyl)propanoate + NADH + H(+). The catalysed reaction is (2E)-3-(cis-5,6-dihydroxycyclohexa-1,3-dien-1-yl)prop-2-enoate + NAD(+) = (2E)-3-(2,3-dihydroxyphenyl)prop-2-enoate + NADH + H(+). It functions in the pathway aromatic compound metabolism; 3-phenylpropanoate degradation. Functionally, converts 3-phenylpropionate-dihydrodiol (PP-dihydrodiol) and cinnamic acid-dihydrodiol (CI-dihydrodiol) into 3-(2,3-dihydroxylphenyl)propanoic acid (DHPP) and 2,3-dihydroxicinnamic acid (DHCI), respectively. In Shigella flexneri serotype 5b (strain 8401), this protein is 3-phenylpropionate-dihydrodiol/cinnamic acid-dihydrodiol dehydrogenase.